A 150-amino-acid polypeptide reads, in one-letter code: Large ribosomal subunit protein bL9 (150 aa).

This sequence belongs to the bacterial ribosomal protein bL9 family.

Binds to the 23S rRNA. In Photobacterium profundum (strain SS9), this protein is Large ribosomal subunit protein bL9.